We begin with the raw amino-acid sequence, 336 residues long: 4-hydroxy-3-methylbut-2-enyl diphosphate reductase (336 aa).

Cysteine 21 is a [4Fe-4S] cluster binding site. 2 residues coordinate (2E)-4-hydroxy-3-methylbut-2-enyl diphosphate: histidine 50 and histidine 86. Residues histidine 50 and histidine 86 each contribute to the dimethylallyl diphosphate site. Isopentenyl diphosphate contacts are provided by histidine 50 and histidine 86. Cysteine 108 serves as a coordination point for [4Fe-4S] cluster. Histidine 136 lines the (2E)-4-hydroxy-3-methylbut-2-enyl diphosphate pocket. Histidine 136 contributes to the dimethylallyl diphosphate binding site. Histidine 136 provides a ligand contact to isopentenyl diphosphate. Residue glutamate 138 is the Proton donor of the active site. Threonine 177 serves as a coordination point for (2E)-4-hydroxy-3-methylbut-2-enyl diphosphate. Cysteine 207 is a [4Fe-4S] cluster binding site. (2E)-4-hydroxy-3-methylbut-2-enyl diphosphate is bound by residues serine 235, serine 236, asparagine 237, and serine 280. Dimethylallyl diphosphate contacts are provided by serine 235, serine 236, asparagine 237, and serine 280. Isopentenyl diphosphate is bound by residues serine 235, serine 236, asparagine 237, and serine 280.

The protein belongs to the IspH family. It depends on [4Fe-4S] cluster as a cofactor.

It carries out the reaction isopentenyl diphosphate + 2 oxidized [2Fe-2S]-[ferredoxin] + H2O = (2E)-4-hydroxy-3-methylbut-2-enyl diphosphate + 2 reduced [2Fe-2S]-[ferredoxin] + 2 H(+). The enzyme catalyses dimethylallyl diphosphate + 2 oxidized [2Fe-2S]-[ferredoxin] + H2O = (2E)-4-hydroxy-3-methylbut-2-enyl diphosphate + 2 reduced [2Fe-2S]-[ferredoxin] + 2 H(+). The protein operates within isoprenoid biosynthesis; dimethylallyl diphosphate biosynthesis; dimethylallyl diphosphate from (2E)-4-hydroxy-3-methylbutenyl diphosphate: step 1/1. Its pathway is isoprenoid biosynthesis; isopentenyl diphosphate biosynthesis via DXP pathway; isopentenyl diphosphate from 1-deoxy-D-xylulose 5-phosphate: step 6/6. In terms of biological role, catalyzes the conversion of 1-hydroxy-2-methyl-2-(E)-butenyl 4-diphosphate (HMBPP) into a mixture of isopentenyl diphosphate (IPP) and dimethylallyl diphosphate (DMAPP). Acts in the terminal step of the DOXP/MEP pathway for isoprenoid precursor biosynthesis. The sequence is that of 4-hydroxy-3-methylbut-2-enyl diphosphate reductase from Mesorhizobium japonicum (strain LMG 29417 / CECT 9101 / MAFF 303099) (Mesorhizobium loti (strain MAFF 303099)).